A 327-amino-acid chain; its full sequence is tRNA dimethylallyltransferase (327 aa).

14-21 (GPTASGKT) contributes to the ATP binding site. 16–21 (TASGKT) is a binding site for substrate. Interaction with substrate tRNA regions lie at residues 39-42 (DSAL) and 163-167 (QRIQR).

The protein belongs to the IPP transferase family. As to quaternary structure, monomer. It depends on Mg(2+) as a cofactor.

It catalyses the reaction adenosine(37) in tRNA + dimethylallyl diphosphate = N(6)-dimethylallyladenosine(37) in tRNA + diphosphate. In terms of biological role, catalyzes the transfer of a dimethylallyl group onto the adenine at position 37 in tRNAs that read codons beginning with uridine, leading to the formation of N6-(dimethylallyl)adenosine (i(6)A). The polypeptide is tRNA dimethylallyltransferase (Xanthomonas euvesicatoria pv. vesicatoria (strain 85-10) (Xanthomonas campestris pv. vesicatoria)).